The primary structure comprises 475 residues: Ankyrin repeat, SAM and basic leucine zipper domain-containing protein 1 (475 aa).

The tract at residues 1–24 is disordered; sequence MAASALRGPPVAGGGESSESEDDG. Phosphoserine is present on residues S17, S18, and S20. ANK repeat units follow at residues 45 to 74, 78 to 107, 110 to 144, 148 to 177, 181 to 210, and 214 to 243; these read EKKE…SVDS, YGWT…NASF, DKQS…DPNV, RLMT…EVNT, NGYT…NKML, and DGKM…PLEG. One can recognise an SAM domain in the interval 272–334; the sequence is SYTAFGDLEV…KILAALKELQ (63 aa).

In terms of assembly, interacts with DDX4, PIWIL1, RANBP9 and TDRD1.

The protein resides in the cytoplasm. In terms of biological role, plays a central role during spermatogenesis by repressing transposable elements and preventing their mobilization, which is essential for the germline integrity. Acts via the piRNA metabolic process, which mediates the repression of transposable elements during meiosis by forming complexes composed of piRNAs and Piwi proteins and governs the methylation and subsequent repression of transposons. Its association with pi-bodies suggests a participation in the primary piRNAs metabolic process. Required prior to the pachytene stage to facilitate the production of multiple types of piRNAs, including those associated with repeats involved in the regulation of retrotransposons. May act by mediating protein-protein interactions during germ cell maturation. The polypeptide is Ankyrin repeat, SAM and basic leucine zipper domain-containing protein 1 (ASZ1) (Gorilla gorilla gorilla (Western lowland gorilla)).